A 132-amino-acid chain; its full sequence is Putative holo-[acyl-carrier-protein] synthase (132 aa).

2 residues coordinate Mg(2+): aspartate 6 and glutamate 67.

This sequence belongs to the P-Pant transferase superfamily. AcpS family.

It catalyses the reaction apo-[ACP] + CoA = holo-[ACP] + adenosine 3',5'-bisphosphate + H(+). In terms of biological role, transfers the 4'-phosphopantetheine moiety from coenzyme A to a Ser of acyl-carrier-protein. This is Putative holo-[acyl-carrier-protein] synthase (new8) from Schizosaccharomyces pombe (strain 972 / ATCC 24843) (Fission yeast).